The sequence spans 196 residues: Elongation factor Ts (196 aa).

Residues 80-83 (TDFV) form an involved in Mg(2+) ion dislocation from EF-Tu region.

Belongs to the EF-Ts family. In terms of assembly, heterotetramer composed of two EF-Ts.EF-Tu dimer complexes.

The protein resides in the cytoplasm. Associates with the EF-Tu.GDP complex and induces the exchange of GDP to GTP. It remains bound to the aminoacyl-tRNA.EF-Tu.GTP complex up to the GTP hydrolysis stage on the ribosome. The sequence is that of Elongation factor Ts (tsf) from Thermus thermophilus (strain ATCC 27634 / DSM 579 / HB8).